Consider the following 160-residue polypeptide: Ribosomal RNA large subunit methyltransferase H (160 aa).

S-adenosyl-L-methionine is bound by residues Leu76 and Gly108.

Belongs to the RNA methyltransferase RlmH family. In terms of assembly, homodimer.

It is found in the cytoplasm. The enzyme catalyses pseudouridine(1915) in 23S rRNA + S-adenosyl-L-methionine = N(3)-methylpseudouridine(1915) in 23S rRNA + S-adenosyl-L-homocysteine + H(+). Specifically methylates the pseudouridine at position 1915 (m3Psi1915) in 23S rRNA. The polypeptide is Ribosomal RNA large subunit methyltransferase H (Rhodopseudomonas palustris (strain BisB5)).